The chain runs to 252 residues: H-2 class II histocompatibility antigen, A-F beta chain (252 aa).

The signal sequence occupies residues 1 to 16 (AAVVVLMVLSSPGTEG). The interval 17–109 (GNSERHFVSQ…VETPTSLRRL (93 aa)) is beta-1. At 17 to 213 (GNSERHFVSQ…RAQSESARSK (197 aa)) the chain is on the extracellular side. Intrachain disulfides connect cysteine 31/cysteine 93 and cysteine 132/cysteine 188. Residue asparagine 35 is glycosylated (N-linked (GlcNAc...) asparagine). Residues 110–203 (EQPNVVISLS…SLKSPITVEW (94 aa)) are beta-2. In terms of domain architecture, Ig-like C1-type spans 112–200 (PNVVISLSRT…EHPSLKSPIT (89 aa)). Positions 204–213 (RAQSESARSK) are connecting peptide. The helical transmembrane segment at 214 to 234 (MLSGIGGCVLGVIFLGLGLFI) threads the bilayer. The Cytoplasmic segment spans residues 235 to 252 (RYRSQKGPRGPPPAGLLQ).

This sequence belongs to the MHC class II family. Ubiquitinated in immature dendritic cells leading to down-regulation of MHC class II.

It is found in the membrane. The protein is H-2 class II histocompatibility antigen, A-F beta chain (H2-Ab1) of Mus musculus (Mouse).